The sequence spans 152 residues: MPVTSELILAALLLVGVLAKSHLIAAAACILLFIKLARFDLAFNFLEQKGLELGLLILLLTIMVPLANGKISERDIIYNLTSIPGLLAILGGALATHLNSQGLQMMQADPAIIFGLIIGSIFGILFLGGMPVGPLMAAGIAALFMEFFKYTK.

Transmembrane regions (helical) follow at residues Leu14 to Ile34, Leu51 to Ile71, Ile76 to Thr96, and Ile112 to Val132.

This sequence belongs to the UPF0756 family.

The protein resides in the cell membrane. In Desulforudis audaxviator (strain MP104C), this protein is UPF0756 membrane protein Daud_1310.